The primary structure comprises 442 residues: Cell adhesion molecule 1 (442 aa).

The N-terminal stretch at 1 to 44 is a signal peptide; sequence MASVVLPSGSQCAAAAAAAAPPGLRLRLLLLLFSAAALIPTGDG. Residues 45–139 form the Ig-like V-type domain; that stretch reads QNLFTKDVTV…PPQESYTTIT (95 aa). Residues 45-374 are Extracellular-facing; sequence QNLFTKDVTV…EEGSIRAVDH (330 aa). A disulfide bridge links Cys-64 with Cys-124. 4 N-linked (GlcNAc...) asparagine glycosylation sites follow: Asn-67, Asn-101, Asn-113, and Asn-165. Ig-like C2-type domains lie at 144 to 238 and 243 to 329; these read PRNL…RYLE and PQVH…YMLY. Cystine bridges form between Cys-166–Cys-220 and Cys-267–Cys-313. Residues Asn-304 and Asn-308 are each glycosylated (N-linked (GlcNAc...) asparagine). The helical transmembrane segment at 375–395 threads the bilayer; it reads AVIGGVVAVVVFAMLCLLIIL. The Cytoplasmic segment spans residues 396–442; the sequence is GRYFARHKGTYFTHEAKGADDAADADTAIINAEGGQNNSEEKKEYFI. Position 422 is a phosphothreonine (Thr-422). Ser-434 carries the phosphoserine modification.

The protein belongs to the nectin family. Homodimer (via Ig-like V-type domain). Interacts with FARP1. Interacts (via Ig-like V-type domain) with CRTAM (via Ig-like V-type domain); the interaction competes with CRTAM homodimerization and CADM1 homodimerization. Interacts (via C-terminus) with EPB41L3/DAL1. The interaction with EPB41L3/DAL1 may act to anchor CADM1 to the actin cytoskeleton. Interacts (via C-terminus) with MPP2 (via PDZ domain). Interacts (via C-terminus) with MPP3 (via PDZ domain); this interaction connects CADM1 with DLG1. Interacts (via C-terminus) with PALS2 (via PDZ domain). As to quaternary structure, (Microbial infection) Interacts with herpes virus 8 proteins vFLIP and vGPCR; these interactions are essential for NF-kappa-B activation. Post-translationally, glycosylation at Asn-67 and Asn-101 promotes adhesive binding and synapse induction.

The protein localises to the cell membrane. It is found in the synapse. Mediates homophilic cell-cell adhesion in a Ca(2+)-independent manner. Also mediates heterophilic cell-cell adhesion with CADM3 and NECTIN3 in a Ca(2+)-independent manner. Interaction with CRTAM promotes natural killer (NK) cell cytotoxicity and interferon-gamma (IFN-gamma) secretion by CD8+ cells in vitro as well as NK cell-mediated rejection of tumors expressing CADM1 in vivo. In mast cells, may mediate attachment to and promote communication with nerves. CADM1, together with MITF, is essential for development and survival of mast cells in vivo. By interacting with CRTAM and thus promoting the adhesion between CD8+ T-cells and CD8+ dendritic cells, regulates the retention of activated CD8+ T-cell within the draining lymph node. Required for the intestinal retention of intraepithelial CD4+ CD8+ T-cells and, to a lesser extent, intraepithelial and lamina propria CD8+ T-cells and CD4+ T-cells. Interaction with CRTAM promotes the adhesion to gut-associated CD103+ dendritic cells, which may facilitate the expression of gut-homing and adhesion molecules on T-cells and the conversion of CD4+ T-cells into CD4+ CD8+ T-cells. Acts as a synaptic cell adhesion molecule and plays a role in the formation of dendritic spines and in synapse assembly. May be involved in neuronal migration, axon growth, pathfinding, and fasciculation on the axons of differentiating neurons. May play diverse roles in the spermatogenesis including in the adhesion of spermatocytes and spermatids to Sertoli cells and for their normal differentiation into mature spermatozoa. Acts as a tumor suppressor in non-small-cell lung cancer (NSCLC) cells. May contribute to the less invasive phenotypes of lepidic growth tumor cells. Its function is as follows. (Microbial infection) Induces cell fusion in neuron infected by a neuropathogenic strain of measles. Interacts with measles hemagglutinin to trigger hyperfusogenic F-mediated membrane fusion and presumably transsynaptic cell-to-cell transmission of the virus. The chain is Cell adhesion molecule 1 from Homo sapiens (Human).